Here is a 206-residue protein sequence, read N- to C-terminus: Probable N-acetyltransferase 14 (206 aa).

Positions 55–206 (LRFVLASFAL…TLVREFSKEL (152 aa)) constitute an N-acetyltransferase domain. The chain crosses the membrane as a helical span at residues 57 to 77 (FVLASFALALLLPVFLAVAAM).

This sequence belongs to the camello family.

Its subcellular location is the membrane. Its function is as follows. Probable acetyltransferase. In terms of biological role, may act as a transcription factor regulating the expression of coproporphyrinogen oxidase by binding to a promoter regulatory element. The chain is Probable N-acetyltransferase 14 from Bos taurus (Bovine).